Reading from the N-terminus, the 295-residue chain is MIYFHDIDPIALSLGPIKVHWYGIMYLLGFTAAWLLGRKRIADGRLPGVDANGFSDLLFYAMLGVVLGGRIGYMLFYALGDFLHNPLLLFKVWDGGMSFHGGLLGVIAACWWWSRKHKLHFFDTMDFMAPLVPLGLGFGRIGNFIGAELWGKYTDGSWGVVFPSGLPAPLNQLDHATLQAQFATGALNQFARHPSQLYEALLEGLVMFVVLWAVSAKPRHRYLVGGLFALMYGLFRFAVEFVRMPDNGVYVAFDWLTRGQILSLPLIAFGLVLLVMSRRAPVLQPQLPVAAEGKA.

7 consecutive transmembrane segments (helical) span residues 17-37 (IKVHWYGIMYLLGFTAAWLLG), 57-77 (LLFYAMLGVVLGGRIGYMLFY), 92-112 (VWDGGMSFHGGLLGVIAACWW), 127-147 (FMAPLVPLGLGFGRIGNFIGA), 196-216 (QLYEALLEGLVMFVVLWAVSA), 222-242 (YLVGGLFALMYGLFRFAVEFV), and 255-275 (WLTRGQILSLPLIAFGLVLLV). Arg-140 contacts a 1,2-diacyl-sn-glycero-3-phospho-(1'-sn-glycerol).

This sequence belongs to the Lgt family.

It localises to the cell inner membrane. The enzyme catalyses L-cysteinyl-[prolipoprotein] + a 1,2-diacyl-sn-glycero-3-phospho-(1'-sn-glycerol) = an S-1,2-diacyl-sn-glyceryl-L-cysteinyl-[prolipoprotein] + sn-glycerol 1-phosphate + H(+). It participates in protein modification; lipoprotein biosynthesis (diacylglyceryl transfer). Functionally, catalyzes the transfer of the diacylglyceryl group from phosphatidylglycerol to the sulfhydryl group of the N-terminal cysteine of a prolipoprotein, the first step in the formation of mature lipoproteins. The sequence is that of Phosphatidylglycerol--prolipoprotein diacylglyceryl transferase from Stenotrophomonas maltophilia (strain R551-3).